A 427-amino-acid polypeptide reads, in one-letter code: 3-phosphoshikimate 1-carboxyvinyltransferase (427 aa).

3-phosphoshikimate contacts are provided by K20, S21, and R25. K20 serves as a coordination point for phosphoenolpyruvate. Residues G92 and R120 each contribute to the phosphoenolpyruvate site. 3-phosphoshikimate-binding residues include S166, Q168, D312, and K339. Phosphoenolpyruvate is bound at residue Q168. D312 acts as the Proton acceptor in catalysis. Phosphoenolpyruvate contacts are provided by R343 and R385.

This sequence belongs to the EPSP synthase family. As to quaternary structure, monomer.

The protein resides in the cytoplasm. The enzyme catalyses 3-phosphoshikimate + phosphoenolpyruvate = 5-O-(1-carboxyvinyl)-3-phosphoshikimate + phosphate. It functions in the pathway metabolic intermediate biosynthesis; chorismate biosynthesis; chorismate from D-erythrose 4-phosphate and phosphoenolpyruvate: step 6/7. In terms of biological role, catalyzes the transfer of the enolpyruvyl moiety of phosphoenolpyruvate (PEP) to the 5-hydroxyl of shikimate-3-phosphate (S3P) to produce enolpyruvyl shikimate-3-phosphate and inorganic phosphate. In Streptococcus thermophilus (strain CNRZ 1066), this protein is 3-phosphoshikimate 1-carboxyvinyltransferase.